Here is a 432-residue protein sequence, read N- to C-terminus: Enolase (432 aa).

Gln167 is a binding site for (2R)-2-phosphoglycerate. Glu209 acts as the Proton donor in catalysis. Asp246, Glu290, and Asp317 together coordinate Mg(2+). (2R)-2-phosphoglycerate is bound by residues Lys342, Arg371, Ser372, and Lys393. Lys342 serves as the catalytic Proton acceptor.

It belongs to the enolase family. In terms of assembly, component of the RNA degradosome, a multiprotein complex involved in RNA processing and mRNA degradation. It depends on Mg(2+) as a cofactor.

The protein resides in the cytoplasm. Its subcellular location is the secreted. It localises to the cell surface. The catalysed reaction is (2R)-2-phosphoglycerate = phosphoenolpyruvate + H2O. It participates in carbohydrate degradation; glycolysis; pyruvate from D-glyceraldehyde 3-phosphate: step 4/5. Functionally, catalyzes the reversible conversion of 2-phosphoglycerate (2-PG) into phosphoenolpyruvate (PEP). It is essential for the degradation of carbohydrates via glycolysis. This chain is Enolase, found in Shigella sonnei (strain Ss046).